The chain runs to 32 residues: Acetolactate synthase, catabolic (32 aa).

The protein belongs to the TPP enzyme family. Homodimer.

It carries out the reaction 2 pyruvate + H(+) = (2S)-2-acetolactate + CO2. Its pathway is polyol metabolism; (R,R)-butane-2,3-diol biosynthesis; (R,R)-butane-2,3-diol from pyruvate: step 1/3. The sequence is that of Acetolactate synthase, catabolic (budB) from Klebsiella aerogenes (Enterobacter aerogenes).